Reading from the N-terminus, the 242-residue chain is Large ribosomal subunit protein uL30y (242 aa).

Belongs to the universal ribosomal protein uL30 family.

In Arabidopsis thaliana (Mouse-ear cress), this protein is Large ribosomal subunit protein uL30y (RPL7B).